Here is a 266-residue protein sequence, read N- to C-terminus: Protein crossbronx-like (266 aa).

The UBC core domain maps to 15 to 178 (KQGYHILAEY…VQEQAIASRN (164 aa)).

The protein belongs to the ubiquitin-conjugating enzyme family. FTS subfamily.

The polypeptide is Protein crossbronx-like (Drosophila yakuba (Fruit fly)).